A 94-amino-acid chain; its full sequence is Na(+)/H(+) antiporter subunit F (94 aa).

Transmembrane regions (helical) follow at residues 2 to 22 (FTLILQIALGIMAVSTFLYVI), 34 to 54 (VVALDAIGINLIAITALVSIL), and 59 to 79 (AFLDIILLLGILSFIGTIAFS).

This sequence belongs to the CPA3 antiporters (TC 2.A.63) subunit F family. Forms a heterooligomeric complex that consists of seven subunits: MrpA, MrpB, MrpC, MrpD, MrpE, MrpF and MrpG.

It localises to the cell membrane. Its function is as follows. Mrp complex is a Na(+)/H(+) antiporter that is considered to be the major Na(+) excretion system in B.subtilis. Has a major role in Na(+) resistance and a minor role in Na(+)- and K(+)-dependent pH homeostasis as compared to TetB. MrpA may be the actual Na(+)/H(+) antiporter, although the six other Mrp proteins are all required for Na(+)/H(+) antiport activity and Na(+) resistance. MrpA is required for initiation of sporulation when external Na(+) concentration increases. Also transports Li(+) but not K(+), Ca(2+) or Mg(2+). In terms of biological role, involved in cholate and Na(+) efflux activities, which may be mechanistically coupled. Does not require other Mrp proteins for its own function. This Bacillus subtilis (strain 168) protein is Na(+)/H(+) antiporter subunit F (mrpF).